The following is a 378-amino-acid chain: Cytochrome b (378 aa).

The next 4 helical transmembrane spans lie at phenylalanine 34–methionine 54, tryptophan 78–valine 99, tryptophan 114–leucine 134, and phenylalanine 179–leucine 199. 2 residues coordinate heme b: histidine 84 and histidine 98. Residues histidine 183 and histidine 197 each contribute to the heme b site. Histidine 202 is a binding site for a ubiquinone. 4 helical membrane-spanning segments follow: residues tyrosine 227 to phenylalanine 247, leucine 289 to histidine 309, leucine 321 to alanine 341, and tyrosine 348 to leucine 368.

Belongs to the cytochrome b family. The main subunits of complex b-c1 are: cytochrome b, cytochrome c1 and the Rieske protein. The cofactor is heme b.

Its subcellular location is the mitochondrion inner membrane. Its function is as follows. Component of the ubiquinol-cytochrome c reductase complex (complex III or cytochrome b-c1 complex) that is part of the mitochondrial respiratory chain. The b-c1 complex mediates electron transfer from ubiquinol to cytochrome c. Contributes to the generation of a proton gradient across the mitochondrial membrane that is then used for ATP synthesis. The polypeptide is Cytochrome b (Aedes aegypti (Yellowfever mosquito)).